We begin with the raw amino-acid sequence, 84 residues long: Large ribosomal subunit protein bL27 (84 aa).

The tract at residues 1-24 is disordered; that stretch reads MAHKKGGGSSKNGRDSNSQRLGVK.

Belongs to the bacterial ribosomal protein bL27 family.

The protein is Large ribosomal subunit protein bL27 of Leptospira borgpetersenii serovar Hardjo-bovis (strain JB197).